The chain runs to 388 residues: Mannitol-1-phosphate 5-dehydrogenase (388 aa).

5-16 (AVHFGGGNIGRG) provides a ligand contact to NAD(+). Lys-213 is a catalytic residue.

This sequence belongs to the mannitol dehydrogenase family. In terms of assembly, monomer.

The enzyme catalyses D-mannitol 1-phosphate + NAD(+) = beta-D-fructose 6-phosphate + NADH + H(+). Catalyzes the NAD(H)-dependent interconversion of D-fructose 6-phosphate and D-mannitol 1-phosphate in the mannitol metabolic pathway. The protein is Mannitol-1-phosphate 5-dehydrogenase of Penicillium rubens (strain ATCC 28089 / DSM 1075 / NRRL 1951 / Wisconsin 54-1255) (Penicillium chrysogenum).